The sequence spans 322 residues: MTIATDMHKEAAGLSTEALLRRVQALKKEMNAIILAHYYTLPEIQQAADIVGDSLALARAAEKTSADVIVFAGVYFMAETAKILNPGKMVLMPDPGAGCPLADSCPEEEFRAFRQAHPDAIAITYVNSSAAIKKLSDIICTSSNAEHIVRQIPPEQQIIFGPDRNLGAWVMKRTGRDMLLWQGFCYVHDAYSEVYMIQAKAMYPDAELIAHPECREEVLRQASFVGSTSALLDYTEKSPRKSFIVATEPGILYEMEKRSPGKVFIPAPKDPANPRSVCKQMKQNTLDKLYLCMVNRSPEITVDESLREGALKSIKRMLEMSA.

His37 and Ser54 together coordinate iminosuccinate. [4Fe-4S] cluster is bound at residue Cys99. Iminosuccinate contacts are provided by residues 125-127 (YVN) and Ser142. Position 185 (Cys185) interacts with [4Fe-4S] cluster. Residues 211-213 (HPE) and Thr228 contribute to the iminosuccinate site. Residue Cys278 coordinates [4Fe-4S] cluster.

It belongs to the quinolinate synthase family. Type 2 subfamily. [4Fe-4S] cluster serves as cofactor.

Its subcellular location is the cytoplasm. The enzyme catalyses iminosuccinate + dihydroxyacetone phosphate = quinolinate + phosphate + 2 H2O + H(+). Its pathway is cofactor biosynthesis; NAD(+) biosynthesis; quinolinate from iminoaspartate: step 1/1. Its function is as follows. Catalyzes the condensation of iminoaspartate with dihydroxyacetone phosphate to form quinolinate. This is Quinolinate synthase from Chlorobaculum tepidum (strain ATCC 49652 / DSM 12025 / NBRC 103806 / TLS) (Chlorobium tepidum).